The primary structure comprises 499 residues: Sensor histidine kinase VxrA (499 aa).

Over 1 to 12 the chain is Cytoplasmic; that stretch reads MRYSFCMLEKTN. A helical transmembrane segment spans residues 13-31; that stretch reads IPLIRALNLTLVSLCFAML. Residues 32-257 lie on the Periplasmic side of the membrane; the sequence is PNPVHADSLP…ICWDVEDHSD (226 aa). 2 disulfide bridges follow: Cys-101–Cys-122 and Cys-241–Cys-249. Residues 258 to 280 form a helical membrane-spanning segment; the sequence is LLRTSMIILVIANIFLVLGWSGY. Over 281-499 the chain is Cytoplasmic; it reads RWNSKRQEMR…IPCETDTASR (219 aa). Positions 298 to 494 constitute a Histidine kinase domain; the sequence is ILTHELRTPI…TFILEIPCET (197 aa). His-301 is subject to Phosphohistidine; by autocatalysis.

In terms of assembly, homodimer. In terms of processing, autophosphorylated. Contains two disulfide bonds that may play a role in the stability of the protein. However, the disulfide bonds are not absolutely essential, as some activity and growth are detected in the absence of each disulfide bond.

The protein localises to the cell inner membrane. The catalysed reaction is ATP + protein L-histidine = ADP + protein N-phospho-L-histidine.. Its function is as follows. Member of the two-component regulatory system VxrB/VxrA involved in the regulation of diverses processes, including virulence, the type VI secretion system (T6SS) and biofilm formation. Functions as a sensor protein kinase which is autophosphorylated at a histidine residue and transfers its phosphate group to the conserved aspartic acid residue in the regulatory domain of VxrB. Is critical for colonization in the infant mouse model. Contributes to the resistance to beta-lactam treatment. This Vibrio cholerae serotype O1 (strain ATCC 39315 / El Tor Inaba N16961) protein is Sensor histidine kinase VxrA.